Here is a 129-residue protein sequence, read N- to C-terminus: Prefoldin subunit alpha (129 aa).

This sequence belongs to the prefoldin alpha subunit family. In terms of assembly, heterohexamer of two alpha and four beta subunits.

The protein localises to the cytoplasm. Its function is as follows. Molecular chaperone capable of stabilizing a range of proteins. Seems to fulfill an ATP-independent, HSP70-like function in archaeal de novo protein folding. This chain is Prefoldin subunit alpha, found in Thermofilum pendens (strain DSM 2475 / Hrk 5).